A 432-amino-acid polypeptide reads, in one-letter code: Homogentisate 1,2-dioxygenase (432 aa).

His286 acts as the Proton acceptor in catalysis. The Fe cation site is built by His329 and Glu335. Homogentisate is bound by residues Tyr344 and His365. His365 provides a ligand contact to Fe cation.

It belongs to the homogentisate dioxygenase family. As to quaternary structure, hexamer; dimer of trimers. It depends on Fe cation as a cofactor.

It carries out the reaction homogentisate + O2 = 4-maleylacetoacetate + H(+). The protein operates within amino-acid degradation; L-phenylalanine degradation; acetoacetate and fumarate from L-phenylalanine: step 4/6. In terms of biological role, involved in the catabolism of homogentisate (2,5-dihydroxyphenylacetate or 2,5-OH-PhAc), a central intermediate in the degradation of phenylalanine and tyrosine. Catalyzes the oxidative ring cleavage of the aromatic ring of homogentisate to yield maleylacetoacetate. In Bordetella pertussis (strain Tohama I / ATCC BAA-589 / NCTC 13251), this protein is Homogentisate 1,2-dioxygenase.